The sequence spans 408 residues: MAENFVVVDGGVVAPKGFKANGHKDRKYGAALIYSEADAVAAGVFTTNKVYAHPVALSKDTLVNNNVFRAIVANSGNANCFTKGGMEDAELLVKKAAELLKIPENQVLSASTGVIGRKMPMDIISLEVERAFENITMESSNENASKAIMTTDAFPKTVAVEFEVNGKSVRIGGIAKGAGMIAPNMLHATMLGFITTDIEISKEDLTNSLQKATDESFNNAVVDGDMSTNDTVYVLANAQSGVKYTDCKEEFDHALTYVSKELAKMIVSDGEGAKKLIEATVFGAETKEDAKKASMSIVRSLLLKTAVFGADPNWGRIAAAVGYSGAEMDMNNFDIIISDISSEKQAILVKAGEQIADCGTPELKLAEEIMKEDKIKIIVDLKMGSFENTAFGCDLGYDYVKINSEYTT.

Residues Thr-150, Lys-176, Thr-189, Glu-271, Asn-403, and Thr-408 each contribute to the substrate site. The active-site Nucleophile is Thr-189.

Belongs to the ArgJ family. Heterotetramer of two alpha and two beta chains.

It is found in the cytoplasm. It carries out the reaction N(2)-acetyl-L-ornithine + L-glutamate = N-acetyl-L-glutamate + L-ornithine. Its pathway is amino-acid biosynthesis; L-arginine biosynthesis; L-ornithine and N-acetyl-L-glutamate from L-glutamate and N(2)-acetyl-L-ornithine (cyclic): step 1/1. In terms of biological role, catalyzes the transfer of the acetyl group from N(2)-acetylornithine to glutamate, forming N-acetylglutamate and L-ornithine. This Methanococcus maripaludis (strain DSM 14266 / JCM 13030 / NBRC 101832 / S2 / LL) protein is Glutamate N-acetyltransferase.